Here is a 157-residue protein sequence, read N- to C-terminus: UPF0225 protein PSPTO_4127 (157 aa).

This sequence belongs to the UPF0225 family.

The polypeptide is UPF0225 protein PSPTO_4127 (Pseudomonas syringae pv. tomato (strain ATCC BAA-871 / DC3000)).